The following is a 428-amino-acid chain: D-amino acid dehydrogenase (428 aa).

An FAD-binding site is contributed by 3 to 17 (VVVLGSGVVGVTSAY).

The protein belongs to the DadA oxidoreductase family. FAD serves as cofactor.

The catalysed reaction is a D-alpha-amino acid + A + H2O = a 2-oxocarboxylate + AH2 + NH4(+). It participates in amino-acid degradation; D-alanine degradation; NH(3) and pyruvate from D-alanine: step 1/1. Functionally, oxidative deamination of D-amino acids. The polypeptide is D-amino acid dehydrogenase (Paraburkholderia phymatum (strain DSM 17167 / CIP 108236 / LMG 21445 / STM815) (Burkholderia phymatum)).